A 333-amino-acid chain; its full sequence is 4-hydroxy-3-methylbut-2-enyl diphosphate reductase (333 aa).

Cys34 provides a ligand contact to [4Fe-4S] cluster. Positions 63 and 96 each coordinate (2E)-4-hydroxy-3-methylbut-2-enyl diphosphate. Residues His63 and His96 each coordinate dimethylallyl diphosphate. 2 residues coordinate isopentenyl diphosphate: His63 and His96. Cys118 lines the [4Fe-4S] cluster pocket. A (2E)-4-hydroxy-3-methylbut-2-enyl diphosphate-binding site is contributed by His146. A dimethylallyl diphosphate-binding site is contributed by His146. His146 provides a ligand contact to isopentenyl diphosphate. The Proton donor role is filled by Glu148. Thr186 is a binding site for (2E)-4-hydroxy-3-methylbut-2-enyl diphosphate. Residue Cys216 participates in [4Fe-4S] cluster binding. 4 residues coordinate (2E)-4-hydroxy-3-methylbut-2-enyl diphosphate: Ser244, Ser245, Asn246, and Ser289. Dimethylallyl diphosphate contacts are provided by Ser244, Ser245, Asn246, and Ser289. Positions 244, 245, 246, and 289 each coordinate isopentenyl diphosphate.

It belongs to the IspH family. It depends on [4Fe-4S] cluster as a cofactor.

The enzyme catalyses isopentenyl diphosphate + 2 oxidized [2Fe-2S]-[ferredoxin] + H2O = (2E)-4-hydroxy-3-methylbut-2-enyl diphosphate + 2 reduced [2Fe-2S]-[ferredoxin] + 2 H(+). The catalysed reaction is dimethylallyl diphosphate + 2 oxidized [2Fe-2S]-[ferredoxin] + H2O = (2E)-4-hydroxy-3-methylbut-2-enyl diphosphate + 2 reduced [2Fe-2S]-[ferredoxin] + 2 H(+). It participates in isoprenoid biosynthesis; dimethylallyl diphosphate biosynthesis; dimethylallyl diphosphate from (2E)-4-hydroxy-3-methylbutenyl diphosphate: step 1/1. The protein operates within isoprenoid biosynthesis; isopentenyl diphosphate biosynthesis via DXP pathway; isopentenyl diphosphate from 1-deoxy-D-xylulose 5-phosphate: step 6/6. Functionally, catalyzes the conversion of 1-hydroxy-2-methyl-2-(E)-butenyl 4-diphosphate (HMBPP) into a mixture of isopentenyl diphosphate (IPP) and dimethylallyl diphosphate (DMAPP). Acts in the terminal step of the DOXP/MEP pathway for isoprenoid precursor biosynthesis. The protein is 4-hydroxy-3-methylbut-2-enyl diphosphate reductase of Mycolicibacterium gilvum (strain PYR-GCK) (Mycobacterium gilvum (strain PYR-GCK)).